We begin with the raw amino-acid sequence, 454 residues long: UPF0210 protein EUBELI_01067 (454 aa).

The protein belongs to the UPF0210 family. In terms of assembly, homodimer.

The polypeptide is UPF0210 protein EUBELI_01067 (Lachnospira eligens (strain ATCC 27750 / DSM 3376 / VPI C15-48 / C15-B4) (Eubacterium eligens)).